Reading from the N-terminus, the 376-residue chain is Ribonuclease D (376 aa).

Positions 8–176 constitute a 3'-5' exonuclease domain; the sequence is IQWIRDDASL…VYLALDARLS (169 aa). An HRDC domain is found at 214-294; sequence RPQQLAVLRE…AEAARLPQSE (81 aa).

It belongs to the RNase D family. A divalent metal cation serves as cofactor.

It is found in the cytoplasm. It carries out the reaction Exonucleolytic cleavage that removes extra residues from the 3'-terminus of tRNA to produce 5'-mononucleotides.. Exonuclease involved in the 3' processing of various precursor tRNAs. Initiates hydrolysis at the 3'-terminus of an RNA molecule and releases 5'-mononucleotides. This is Ribonuclease D from Pseudomonas paraeruginosa (strain DSM 24068 / PA7) (Pseudomonas aeruginosa (strain PA7)).